The chain runs to 20 residues: Outer membrane protein 40Va (20 aa).

The protein belongs to the Gram-negative porin family. In terms of assembly, homotrimer.

It localises to the cell outer membrane. Its function is as follows. Forms pores that allow passive diffusion of small molecules across the outer membrane. In Vibrio alginolyticus, this protein is Outer membrane protein 40Va.